Reading from the N-terminus, the 619-residue chain is Chaperone protein HscA homolog (619 aa).

The protein belongs to the heat shock protein 70 family.

In terms of biological role, chaperone involved in the maturation of iron-sulfur cluster-containing proteins. Has a low intrinsic ATPase activity which is markedly stimulated by HscB. The chain is Chaperone protein HscA homolog from Laribacter hongkongensis (strain HLHK9).